The following is a 488-amino-acid chain: NADH-ubiquinone oxidoreductase chain 2 (488 aa).

A run of 14 helical transmembrane segments spans residues 4–24, 45–65, 84–104, 111–131, 134–154, 168–188, 215–235, 252–272, 282–302, 308–328, 334–354, 375–395, 400–420, and 456–476; these read LFLAVFPEIFIINATFILLIH, WLGLLSVLITLLLLAAGAPLL, FCQILLLLSTAGTISMCFDFF, AFEFIVLILLSTCSMLFMISA, LIAMYLAIELQSLCFYVLAAS, YLILGAFSSGILLFGCSMIYG, IFMGILFIAVGFLFKITAVPF, AFLSIAPKISIFANILRVFIY, IFFFCSIASMILGALAAMAQT, LAYSSIGHVGYICIGFSCGTI, LLIGLFIYALTTINAFAIVLA, ILAITFSITMFSYAGIPPLAG, FYLFFAALGCGAYFLASVGVV, and LLLAMTSSFITLFFLYPSPLF.

Belongs to the complex I subunit 2 family.

The protein localises to the mitochondrion inner membrane. The catalysed reaction is a ubiquinone + NADH + 5 H(+)(in) = a ubiquinol + NAD(+) + 4 H(+)(out). Core subunit of the mitochondrial membrane respiratory chain NADH dehydrogenase (Complex I) that is believed to belong to the minimal assembly required for catalysis. Complex I functions in the transfer of electrons from NADH to the respiratory chain. The immediate electron acceptor for the enzyme is believed to be ubiquinone. The protein is NADH-ubiquinone oxidoreductase chain 2 (ND2) of Oenothera berteroana (Bertero's evening primrose).